The sequence spans 415 residues: MLLLLALVSVALAHASEEHFDGNRVYRVSVHGEDHVNLIQELANTKEIDFWKPDSATQVKPLTTVDFHVKAEDVADVENFLEENEVHYEVLISNVRNALESQFDSHTRASGHSYTKYNKWETIEAWIQQVATDNPDLVTQSVIGTTFEGRNMYVLKIGKTRPNKPAIFIDCGFHAREWISPAFCQWFVREAVRTYNQEIHMKQLLDELDFYVLPVVNIDGYVYTWTKDRMWRKTRSTMAGSSCLGVRPNRNFNAGWCEVGASRSPCSETYCGPAPESEKETKALADFIRNNLSTIKAYLTIHSYSQMMLYPYSYDYKLPENYEELNALVKGAAKELATLHGTKYTYGPGATTIYPAAGGSDDWSYDQGIKYSFTFELRDTGFFGFLLPESQIRQTCEETMLAVKYIANYVREHLY.

Residues 1–13 form the signal peptide; it reads MLLLLALVSVALA. A propeptide spans 14–108 (activation peptide); it reads HASEEHFDGN…LESQFDSHTR (95 aa). Residues 116-410 form the Peptidase M14 domain; that stretch reads KYNKWETIEA…LAVKYIANYV (295 aa). Cys-171 and Cys-184 are oxidised to a cystine. Positions 174 and 177 each coordinate Zn(2+). Substrate-binding positions include 174 to 177, Arg-232, and 249 to 250; these read HARE and NR. 2 disulfide bridges follow: Cys-243–Cys-266 and Cys-257–Cys-271. Zn(2+) is bound at residue His-302. Residues 303 to 304 and Tyr-354 each bind substrate; that span reads SY. The active-site Proton donor/acceptor is the Glu-376.

The protein belongs to the peptidase M14 family. It depends on Zn(2+) as a cofactor.

Its subcellular location is the secreted. It is found in the zymogen granule lumen. It carries out the reaction Preferential release of a C-terminal lysine or arginine amino acid.. The chain is Carboxypeptidase B (Cpb1) from Rattus norvegicus (Rat).